Consider the following 308-residue polypeptide: Nuclear transcription factor Y subunit A-5 (308 aa).

Positions 1-10 (MQVFQRKEDS) are enriched in basic and acidic residues. 2 disordered regions span residues 1–26 (MQVFQRKEDSSWGNSMPTTNSNIQGS) and 49–71 (GLQLQNQDSTSSQSTEEESGGGE). The span at 11-26 (SWGNSMPTTNSNIQGS) shows a compositional bias: polar residues. Positions 181-204 (FVNAKQYHAILRRRKHRAKLEAQN) match the Subunit association domain (SAD) motif. The NFYA/HAP2-type DNA-binding region spans 211 to 236 (KPYLHESRHLHALKRARGSGGRFLNT). Residues 251–273 (MANGQNFSMSPHGGGSGIGSSSI) form a disordered region.

Belongs to the NFYA/HAP2 subunit family. As to quaternary structure, heterotrimeric transcription factor composed of three components, NF-YA, NF-YB and NF-YC. NF-YB and NF-YC must interact and dimerize for NF-YA association and DNA binding. In terms of tissue distribution, expressed in the whole plant, except roots. Present in etiolated seedlings.

It is found in the nucleus. Stimulates the transcription of various genes by recognizing and binding to a CCAAT motif in promoters. Involved in the blue light (BL) and abscisic acid (ABA) signaling pathways. This is Nuclear transcription factor Y subunit A-5 (NFYA5) from Arabidopsis thaliana (Mouse-ear cress).